A 192-amino-acid polypeptide reads, in one-letter code: Probable apo-citrate lyase phosphoribosyl-dephospho-CoA transferase (192 aa).

The protein belongs to the CitX family.

It carries out the reaction apo-[citrate lyase ACP] + 2'-(5''-triphospho-alpha-D-ribosyl)-3'-dephospho-CoA = holo-[citrate lyase ACP] + diphosphate. Functionally, transfers 2-(5''-triphosphoribosyl)-3'-dephosphocoenzyme-A on a serine residue to the apo-acyl carrier protein (gamma chain) of the citrate lyase to yield holo-acyl carrier protein. The polypeptide is Probable apo-citrate lyase phosphoribosyl-dephospho-CoA transferase (Streptococcus pyogenes serotype M3 (strain ATCC BAA-595 / MGAS315)).